Here is a 160-residue protein sequence, read N- to C-terminus: Iron-sulfur assembly protein IscA1 (160 aa).

This sequence belongs to the HesB/IscA family. Tetramer.

Its subcellular location is the mitochondrion. The protein operates within cofactor biosynthesis; iron-sulfur cluster biosynthesis. Its function is as follows. Participates in iron-sulfur cluster formation (ISC) pathway for iron-sulfur (Fe-S) cluster biogenesis. Can bind iron and [4Fe-4S] clusters. May function as an iron chaperone. The protein is Iron-sulfur assembly protein IscA1 of Plasmodium falciparum (isolate 3D7).